Consider the following 164-residue polypeptide: Phosphohistidine phosphatase SixA homolog (164 aa).

Belongs to the SixA phosphatase family.

In Haemophilus influenzae (strain ATCC 51907 / DSM 11121 / KW20 / Rd), this protein is Phosphohistidine phosphatase SixA homolog (sixA-A).